The primary structure comprises 320 residues: Short-chain dehydrogenase TIC 32 B, chloroplastic (320 aa).

Residues 40–46 (GGTSGIG), 92–93 (DL), Asn-119, and Thr-140 each bind NADP(+). Residue Ser-174 coordinates substrate. Tyr-196 serves as the catalytic Proton acceptor. The tract at residues 301–317 (DTTLADKLWDFSIKLVD) is interaction with calmodulin.

It belongs to the short-chain dehydrogenases/reductases (SDR) family. In terms of assembly, part of the Tic complex.

Its subcellular location is the plastid. The protein resides in the chloroplast inner membrane. Involved in protein precursor import into chloroplasts. The polypeptide is Short-chain dehydrogenase TIC 32 B, chloroplastic (Brassica napus (Rape)).